A 421-amino-acid chain; its full sequence is Acetylglutamate kinase (421 aa).

The acetylglutamate kinase stretch occupies residues Met-1 to Arg-252. Residues Ala-59 to Gly-60, Arg-81, and Asn-170 each bind substrate. The region spanning Glu-274–Ile-420 is the N-acetyltransferase domain.

This sequence in the N-terminal section; belongs to the acetylglutamate kinase family. ArgB subfamily.

It is found in the cytoplasm. The catalysed reaction is N-acetyl-L-glutamate + ATP = N-acetyl-L-glutamyl 5-phosphate + ADP. It participates in amino-acid biosynthesis; L-arginine biosynthesis; N(2)-acetyl-L-ornithine from L-glutamate: step 2/4. The polypeptide is Acetylglutamate kinase (argB) (Xylella fastidiosa (strain Temecula1 / ATCC 700964)).